The primary structure comprises 164 residues: Protein-export protein SecB (164 aa).

The protein belongs to the SecB family. Homotetramer, a dimer of dimers. One homotetramer interacts with 1 SecA dimer.

Its subcellular location is the cytoplasm. Its function is as follows. One of the proteins required for the normal export of preproteins out of the cell cytoplasm. It is a molecular chaperone that binds to a subset of precursor proteins, maintaining them in a translocation-competent state. It also specifically binds to its receptor SecA. The polypeptide is Protein-export protein SecB (Janthinobacterium sp. (strain Marseille) (Minibacterium massiliensis)).